The primary structure comprises 264 residues: Small ribosomal subunit protein eS1 (264 aa).

The interval 233–264 (GEGGGAGKPSGDEAGAKVERADGYEPPVQESV) is disordered. The segment covering 242–255 (SGDEAGAKVERADG) has biased composition (basic and acidic residues).

The protein belongs to the eukaryotic ribosomal protein eS1 family. In terms of assembly, component of the small ribosomal subunit. Mature ribosomes consist of a small (40S) and a large (60S) subunit. The 40S subunit contains about 33 different proteins and 1 molecule of RNA (18S). The 60S subunit contains about 49 different proteins and 3 molecules of RNA (25S, 5.8S and 5S).

Its subcellular location is the cytoplasm. This Eimeria tenella (Coccidian parasite) protein is Small ribosomal subunit protein eS1.